We begin with the raw amino-acid sequence, 1271 residues long: Probable WRKY transcription factor protein 1 (1271 aa).

Residues 1 to 12 (MGAQYSTELNKY) are compositionally biased toward polar residues. Disordered regions lie at residues 1 to 138 (MGAQ…NSDR), 204 to 312 (NNNN…QQNG), and 370 to 515 (NNNN…RTNS). Residues 9–71 (LNKYNNNNNN…NNNNNNNNNN (63 aa)) adopt a coiled-coil conformation. Low complexity-rich tracts occupy residues 13 to 103 (NNNN…NNNN), 116 to 135 (INNT…NNNN), 204 to 216 (NNNN…NENN), and 223 to 259 (SSTT…NNNN). Residues 260-274 (NEDDEDDYGDDDTIE) show a composition bias toward acidic residues. Residues 297 to 312 (SNLNDTNGGNSPQQNG) show a composition bias toward polar residues. Positions 320–372 (KKLLALQQKQLEQEQEQKQQQKQQQQQQQQQQQQQQQQQQQQQKDAIENINNN) form a coiled coil. Low complexity predominate over residues 370–388 (NNNNNNKLQPIVKNSVNKT). A compositionally biased stretch (acidic residues) spans 413–442 (NEDEYDASDEYIDDDDDDDEKYDDDDDEYF). Residues 443–458 (EGNNNNNYKKNNISNK) are compositionally biased toward low complexity. Residues 475–487 (EIFKQKKLNHDKN) are compositionally biased toward basic and acidic residues. The segment covering 488–515 (QSNPKQQLTSHSEFDNSLLNKNQSRTNS) has biased composition (polar residues). Residues 520 to 574 (LQIKEENYHQIQQEHGEKQQQQQQQQQQPQQQQQQQQQQQQQQQQEMQVDKEQTE) are a coiled coil. The span at 578–587 (NTNKKEEQKP) shows a compositional bias: basic and acidic residues. 2 disordered regions span residues 578–650 (NTNK…EGFL) and 667–811 (SKKS…NISN). The span at 610–642 (NNENNNNNNNNNNNNNNNNNNNNNNNNNNYRNN) shows a compositional bias: low complexity. Polar residues predominate over residues 672-702 (NVVPTSPKSNLSDQQPPFSPVQISPQKQSPA). 3 stretches are compositionally biased toward low complexity: residues 703–715 (TTTT…TPTP), 725–766 (NNNI…NNIN), and 774–811 (NSTQ…NISN). Residues 766-786 (NNEEDEENNSTQNNNNNNNNN) adopt a coiled-coil conformation. The WRKY 1 DNA-binding region spans 808-872 (NISNIVSDGY…YKGEHCHGFP (65 aa)). Positions 839, 844, 867, and 869 each coordinate Zn(2+). Positions 890–1095 (FEGLDGNNNN…RFNGTSESKG (206 aa)) are disordered. The segment covering 895 to 918 (GNNNNNNNNNNNNNNYSSNSNSNG) has biased composition (low complexity). The span at 919–937 (NGNGNGNGNGNGNGNGNGN) shows a compositional bias: gly residues. The segment covering 938 to 956 (SNGNQDQNGNSFNDQNGDS) has biased composition (low complexity). Over residues 957–966 (PTQHGQISPM) the composition is skewed to polar residues. The segment covering 967 to 995 (NSPKNTIPTTTTTTTSISTYVNTNSTNKK) has biased composition (low complexity). Basic and acidic residues predominate over residues 998–1010 (SKQEKKISVKNET). Acidic residues predominate over residues 1011 to 1021 (TDDDEFQEDID). The stretch at 1013-1040 (DDEFQEDIDQLSNNNNNNNNNNNNNNNN) forms a coiled coil. The span at 1025–1085 (NNNNNNNNNN…NNNNNNNNNN (61 aa)) shows a compositional bias: low complexity. The segment at residues 1105–1167 (SSIDHLDDGF…YRGKHNHDPP (63 aa)) is a DNA-binding region (WRKY 2). Zn(2+) contacts are provided by C1136, C1141, H1162, and H1164. A disordered region spans residues 1180–1210 (NGLYNNNNNNNNNNNNNNNNNNNNNNINNIN). The span at 1184–1210 (NNNNNNNNNNNNNNNNNNNNNNINNIN) shows a compositional bias: low complexity.

The protein belongs to the WRKY group I family.

It localises to the nucleus. In terms of biological role, probable transcription factor. Interacts specifically with the W box (5'-(T)TGAC[CT]-3'), a frequently occurring elicitor-responsive cis-acting element. In Dictyostelium discoideum (Social amoeba), this protein is Probable WRKY transcription factor protein 1 (wrky1).